Reading from the N-terminus, the 345-residue chain is uncharacterized protein (345 aa).

PDZ GRASP-type domains lie at 27–112 (CGFR…WASI) and 118–207 (AIWH…HGVL). The GRASP stretch occupies residues 27 to 223 (CGFRVLKVEN…LSGPPPQPGD (197 aa)). Positions 229 to 345 (PMLGGPDHKV…APQNEELVKN (117 aa)) are disordered. Residues 297-308 (KLSRELDHKTKD) are compositionally biased toward basic and acidic residues. 2 stretches are compositionally biased toward polar residues: residues 309–318 (ASSTNDSQTT) and 328–338 (VNSTNDESAPQ).

It is found in the golgi apparatus membrane. This is an uncharacterized protein from Schizosaccharomyces pombe (strain 972 / ATCC 24843) (Fission yeast).